The primary structure comprises 238 residues: N-acetylneuraminic acid outer membrane channel protein NanC (238 aa).

The N-terminal stretch at methionine 1–alanine 23 is a signal peptide. Residues alanine 24–threonine 25 lie on the Periplasmic side of the membrane. The segment at leucine 26–tyrosine 32 is a transmembrane helix. Residues arginine 33–tyrosine 39 are Extracellular-facing. The chain crosses the lipid bilayer at residues glutamate 40–tryptophan 49. At glutamine 50–glycine 52 the chain is on the periplasmic side. The segment at tryptophan 53–threonine 61 is a transmembrane helix. Residues tryptophan 62–asparagine 76 are Extracellular-facing. The hydrophobic stretch at aspartate 77–isoleucine 86 threads the membrane. The Periplasmic segment spans residues lysine 87–glutamine 91. The chain crosses the lipid bilayer at residues tryptophan 92–phenylalanine 102. Topologically, residues serine 103–threonine 107 are extracellular. Over arginine 108–tryptophan 117 the chain traverses the membrane. At aspartate 118 to aspartate 122 the chain is on the periplasmic side. The chain crosses the lipid bilayer at residues leucine 123–aspartate 132. Topologically, residues tryptophan 133–histidine 151 are extracellular. The segment at arginine 152 to tyrosine 159 is a transmembrane helix. The Periplasmic portion of the chain corresponds to histidine 160 to aspartate 164. A transmembrane span lies at residues phenylalanine 165–leucine 173. Over tyrosine 174–threonine 190 the chain is Extracellular. A transmembrane span lies at residues glutamate 191–methionine 200. Topologically, residues threonine 201–aspartate 203 are periplasmic. Residues isoleucine 204–tyrosine 212 are membrane-embedded. Residues leucine 213–asparagine 228 lie on the Extracellular side of the membrane. A transmembrane helix spans residues serine 229–phenylalanine 236. Residues lysine 237–leucine 238 are Periplasmic-facing.

Belongs to the oligogalacturonate-specific porin KdgM (TC 1.B.35) family. NanC subfamily. In terms of assembly, monomer.

Its subcellular location is the cell outer membrane. The enzyme catalyses N-acetylneuraminate(in) = N-acetylneuraminate(out). Its function is as follows. Outer membrane channel protein allowing the entry of N-acetylneuraminic acid (Neu5Ac, the most abundant sialic acid on host cell surfaces) into the bacteria. NanC proteins form high-conductance channels which are open at low membrane potentials and which have a weak anion selectivity. This is N-acetylneuraminic acid outer membrane channel protein NanC (nanC) from Escherichia coli O6:H1 (strain CFT073 / ATCC 700928 / UPEC).